The sequence spans 342 residues: Spore photoproduct lyase (342 aa).

Residues 77 to 305 enclose the Radical SAM core domain; that stretch reads SKPSAEYAIP…EEKRRYKWGR (229 aa). Residues cysteine 91, cysteine 95, and cysteine 98 each contribute to the [4Fe-4S] cluster site. Residues 218-235 constitute a DNA-binding region (H-T-H motif); that stretch reads EAAVKVAKAGYPLGFIVA.

Belongs to the radical SAM superfamily. SPL family. As to quaternary structure, monomer or homodimer. Requires [4Fe-4S] cluster as cofactor. The cofactor is S-adenosyl-L-methionine.

The enzyme catalyses (5R)-5,6-dihydro-5-(thymidin-7-yl)thymidine in DNA = a thymidine dimer in DNA. Its function is as follows. Involved in repair of UV radiation-induced DNA damage during spore germination. Can repair thymine dimer 5-thyminyl-5,6-dihydrothymine (known as spore photoproduct (SP)) by in situ monomerization of SP to two thymines. The polypeptide is Spore photoproduct lyase (splB) (Bacillus subtilis (strain 168)).